The sequence spans 553 residues: Dihydroxy-acid dehydratase 1 (553 aa).

Position 78 (Asp-78) interacts with Mg(2+). Position 119 (Cys-119) interacts with [2Fe-2S] cluster. Asp-120 and Lys-121 together coordinate Mg(2+). Position 121 is an N6-carboxylysine (Lys-121). Cys-191 serves as a coordination point for [2Fe-2S] cluster. Glu-444 contacts Mg(2+). Ser-470 serves as the catalytic Proton acceptor.

It belongs to the IlvD/Edd family. In terms of assembly, homodimer. Requires [2Fe-2S] cluster as cofactor. Mg(2+) serves as cofactor.

It carries out the reaction (2R)-2,3-dihydroxy-3-methylbutanoate = 3-methyl-2-oxobutanoate + H2O. The enzyme catalyses (2R,3R)-2,3-dihydroxy-3-methylpentanoate = (S)-3-methyl-2-oxopentanoate + H2O. Its pathway is amino-acid biosynthesis; L-isoleucine biosynthesis; L-isoleucine from 2-oxobutanoate: step 3/4. It functions in the pathway amino-acid biosynthesis; L-valine biosynthesis; L-valine from pyruvate: step 3/4. Its function is as follows. Functions in the biosynthesis of branched-chain amino acids. Catalyzes the dehydration of (2R,3R)-2,3-dihydroxy-3-methylpentanoate (2,3-dihydroxy-3-methylvalerate) into 2-oxo-3-methylpentanoate (2-oxo-3-methylvalerate) and of (2R)-2,3-dihydroxy-3-methylbutanoate (2,3-dihydroxyisovalerate) into 2-oxo-3-methylbutanoate (2-oxoisovalerate), the penultimate precursor to L-isoleucine and L-valine, respectively. This is Dihydroxy-acid dehydratase 1 from Methanosarcina acetivorans (strain ATCC 35395 / DSM 2834 / JCM 12185 / C2A).